The primary structure comprises 224 residues: Urease accessory protein UreF (224 aa).

It belongs to the UreF family. In terms of assembly, ureD, UreF and UreG form a complex that acts as a GTP-hydrolysis-dependent molecular chaperone, activating the urease apoprotein by helping to assemble the nickel containing metallocenter of UreC. The UreE protein probably delivers the nickel.

Its subcellular location is the cytoplasm. Functionally, required for maturation of urease via the functional incorporation of the urease nickel metallocenter. In Pseudomonas fluorescens (strain SBW25), this protein is Urease accessory protein UreF.